The primary structure comprises 254 residues: 3-deoxy-manno-octulosonate cytidylyltransferase (254 aa).

This sequence belongs to the KdsB family.

The protein resides in the cytoplasm. It carries out the reaction 3-deoxy-alpha-D-manno-oct-2-ulosonate + CTP = CMP-3-deoxy-beta-D-manno-octulosonate + diphosphate. The protein operates within nucleotide-sugar biosynthesis; CMP-3-deoxy-D-manno-octulosonate biosynthesis; CMP-3-deoxy-D-manno-octulosonate from 3-deoxy-D-manno-octulosonate and CTP: step 1/1. It participates in bacterial outer membrane biogenesis; lipopolysaccharide biosynthesis. Its function is as follows. Activates KDO (a required 8-carbon sugar) for incorporation into bacterial lipopolysaccharide in Gram-negative bacteria. The polypeptide is 3-deoxy-manno-octulosonate cytidylyltransferase (Bordetella bronchiseptica (strain ATCC BAA-588 / NCTC 13252 / RB50) (Alcaligenes bronchisepticus)).